A 210-amino-acid chain; its full sequence is MKFFVVIVFCAIFLSVSGDSDNMQDTCPTAPGEQSIFFINGYPCKNPTKITAQDFKSTKLTEAGDTDNYLQSNVTLLTALEFPGLNTLGLSVSRTDLERDGSVPFHSHPRSSEMLFVVKGVVFAGFVDTNNKIFQTVLQKGDVFVFPKGLLHFCLSGGFEPATAFSFYNSQNPGVVNIGEVFGIDQEHIKIMTRCLATGSGCRVTDGDEL.

A signal peptide spans 1–18 (MKFFVVIVFCAIFLSVSG). C27 and C44 are oxidised to a cystine. The region spanning 58 to 190 (TKLTEAGDTD…VFGIDQEHIK (133 aa)) is the Cupin type-1 domain. An N-linked (GlcNAc...) asparagine glycan is attached at N73. The Mn(2+) site is built by H106, H108, E113, and H152.

It belongs to the germin family. In terms of assembly, oligomer (believed to be a pentamer but probably hexamer).

Its subcellular location is the secreted. It is found in the extracellular space. The protein resides in the apoplast. In terms of biological role, may play a role in plant defense. Probably has no oxalate oxidase activity even if the active site is conserved. The protein is Germin-like protein subfamily 3 member 4 of Arabidopsis thaliana (Mouse-ear cress).